The following is a 293-amino-acid chain: 4-hydroxy-3-methylbut-2-enyl diphosphate reductase (293 aa).

Cys12 is a [4Fe-4S] cluster binding site. 2 residues coordinate (2E)-4-hydroxy-3-methylbut-2-enyl diphosphate: His40 and His74. The dimethylallyl diphosphate site is built by His40 and His74. Residues His40 and His74 each contribute to the isopentenyl diphosphate site. A [4Fe-4S] cluster-binding site is contributed by Cys96. Residue His128 participates in (2E)-4-hydroxy-3-methylbut-2-enyl diphosphate binding. His128 lines the dimethylallyl diphosphate pocket. An isopentenyl diphosphate-binding site is contributed by His128. Glu130 functions as the Proton donor in the catalytic mechanism. Residue Thr166 coordinates (2E)-4-hydroxy-3-methylbut-2-enyl diphosphate. Cys202 contributes to the [4Fe-4S] cluster binding site. Ser230, Ser231, Asn232, and Ser274 together coordinate (2E)-4-hydroxy-3-methylbut-2-enyl diphosphate. Dimethylallyl diphosphate is bound by residues Ser230, Ser231, Asn232, and Ser274. Isopentenyl diphosphate contacts are provided by Ser230, Ser231, Asn232, and Ser274.

The protein belongs to the IspH family. [4Fe-4S] cluster serves as cofactor.

The enzyme catalyses isopentenyl diphosphate + 2 oxidized [2Fe-2S]-[ferredoxin] + H2O = (2E)-4-hydroxy-3-methylbut-2-enyl diphosphate + 2 reduced [2Fe-2S]-[ferredoxin] + 2 H(+). It carries out the reaction dimethylallyl diphosphate + 2 oxidized [2Fe-2S]-[ferredoxin] + H2O = (2E)-4-hydroxy-3-methylbut-2-enyl diphosphate + 2 reduced [2Fe-2S]-[ferredoxin] + 2 H(+). Its pathway is isoprenoid biosynthesis; dimethylallyl diphosphate biosynthesis; dimethylallyl diphosphate from (2E)-4-hydroxy-3-methylbutenyl diphosphate: step 1/1. It participates in isoprenoid biosynthesis; isopentenyl diphosphate biosynthesis via DXP pathway; isopentenyl diphosphate from 1-deoxy-D-xylulose 5-phosphate: step 6/6. Its function is as follows. Catalyzes the conversion of 1-hydroxy-2-methyl-2-(E)-butenyl 4-diphosphate (HMBPP) into a mixture of isopentenyl diphosphate (IPP) and dimethylallyl diphosphate (DMAPP). Acts in the terminal step of the DOXP/MEP pathway for isoprenoid precursor biosynthesis. This chain is 4-hydroxy-3-methylbut-2-enyl diphosphate reductase, found in Cytophaga hutchinsonii (strain ATCC 33406 / DSM 1761 / CIP 103989 / NBRC 15051 / NCIMB 9469 / D465).